A 177-amino-acid chain; its full sequence is MSRVAKNPVVLPAGVEVKLAGQQLSVKGAKGALELNVHSSVEVIQEGSELRFAARNGDQQNKAMAGTTRALVNNMVIGVSQGFERKLQLVGVGYKAQAKGQVLNLALGFSHPIDYELPAGVVAETPNQTEILIKGIDKQLVGQVAAEIRDFRRPEPYKGKGVRYADEVVRRKEAKKK.

The protein belongs to the universal ribosomal protein uL6 family. Part of the 50S ribosomal subunit.

Its function is as follows. This protein binds to the 23S rRNA, and is important in its secondary structure. It is located near the subunit interface in the base of the L7/L12 stalk, and near the tRNA binding site of the peptidyltransferase center. The polypeptide is Large ribosomal subunit protein uL6 (Ectopseudomonas mendocina (strain ymp) (Pseudomonas mendocina)).